Consider the following 364-residue polypeptide: Aminomethyltransferase (364 aa).

It belongs to the GcvT family. In terms of assembly, the glycine cleavage system is composed of four proteins: P, T, L and H.

The catalysed reaction is N(6)-[(R)-S(8)-aminomethyldihydrolipoyl]-L-lysyl-[protein] + (6S)-5,6,7,8-tetrahydrofolate = N(6)-[(R)-dihydrolipoyl]-L-lysyl-[protein] + (6R)-5,10-methylene-5,6,7,8-tetrahydrofolate + NH4(+). Its function is as follows. The glycine cleavage system catalyzes the degradation of glycine. In Escherichia coli O6:H1 (strain CFT073 / ATCC 700928 / UPEC), this protein is Aminomethyltransferase.